Consider the following 295-residue polypeptide: Structure-specific endonuclease subunit SLX1 (295 aa).

One can recognise a GIY-YIG domain in the interval 11–93 (EFYGVYILQS…QHPKTSRHMA (83 aa)). The interval 85–133 (HPKTSRHMAGGGGSVTATAETAKSAPVAGKSDATSPAKNRRNAAPVARS) is disordered. Residues 205-272 (CCLCSDAIDY…IPSDVSCSQC (68 aa)) form an SLX1-type zinc finger.

This sequence belongs to the SLX1 family. As to quaternary structure, forms a heterodimer with SLX4. A divalent metal cation is required as a cofactor.

Its subcellular location is the nucleus. Catalytic subunit of the SLX1-SLX4 structure-specific endonuclease that resolves DNA secondary structures generated during DNA repair and recombination. Has endonuclease activity towards branched DNA substrates, introducing single-strand cuts in duplex DNA close to junctions with ss-DNA. This chain is Structure-specific endonuclease subunit SLX1, found in Meyerozyma guilliermondii (strain ATCC 6260 / CBS 566 / DSM 6381 / JCM 1539 / NBRC 10279 / NRRL Y-324) (Yeast).